A 257-amino-acid polypeptide reads, in one-letter code: 3-methyl-2-oxobutanoate hydroxymethyltransferase (257 aa).

Residues aspartate 42 and aspartate 86 each coordinate Mg(2+). Residues 42–43 (DS), aspartate 86, and lysine 116 contribute to the 3-methyl-2-oxobutanoate site. Glutamate 118 is a binding site for Mg(2+). Glutamate 185 acts as the Proton acceptor in catalysis.

The protein belongs to the PanB family. Homodecamer; pentamer of dimers. The cofactor is Mg(2+).

The protein localises to the cytoplasm. It carries out the reaction 3-methyl-2-oxobutanoate + (6R)-5,10-methylene-5,6,7,8-tetrahydrofolate + H2O = 2-dehydropantoate + (6S)-5,6,7,8-tetrahydrofolate. The protein operates within cofactor biosynthesis; (R)-pantothenate biosynthesis; (R)-pantoate from 3-methyl-2-oxobutanoate: step 1/2. Functionally, catalyzes the reversible reaction in which hydroxymethyl group from 5,10-methylenetetrahydrofolate is transferred onto alpha-ketoisovalerate to form ketopantoate. The polypeptide is 3-methyl-2-oxobutanoate hydroxymethyltransferase (Prochlorococcus marinus (strain MIT 9515)).